The sequence spans 89 residues: UPF0147 protein Msed_2034 (89 aa).

It belongs to the UPF0147 family.

This Metallosphaera sedula (strain ATCC 51363 / DSM 5348 / JCM 9185 / NBRC 15509 / TH2) protein is UPF0147 protein Msed_2034.